The chain runs to 492 residues: 2-succinylbenzoate--CoA ligase (492 aa).

It belongs to the ATP-dependent AMP-binding enzyme family. MenE subfamily.

The enzyme catalyses 2-succinylbenzoate + ATP + CoA = 2-succinylbenzoyl-CoA + AMP + diphosphate. It participates in quinol/quinone metabolism; 1,4-dihydroxy-2-naphthoate biosynthesis; 1,4-dihydroxy-2-naphthoate from chorismate: step 5/7. Its pathway is quinol/quinone metabolism; menaquinone biosynthesis. Its function is as follows. Converts 2-succinylbenzoate (OSB) to 2-succinylbenzoyl-CoA (OSB-CoA). This is 2-succinylbenzoate--CoA ligase from Staphylococcus aureus (strain Mu3 / ATCC 700698).